The chain runs to 92 residues: Small ribosomal subunit protein uS19 (92 aa).

It belongs to the universal ribosomal protein uS19 family.

Protein S19 forms a complex with S13 that binds strongly to the 16S ribosomal RNA. The chain is Small ribosomal subunit protein uS19 from Variovorax paradoxus (strain S110).